The sequence spans 379 residues: ATP phosphoribosyltransferase regulatory subunit (379 aa).

It belongs to the class-II aminoacyl-tRNA synthetase family. HisZ subfamily. As to quaternary structure, heteromultimer composed of HisG and HisZ subunits.

Its subcellular location is the cytoplasm. Its pathway is amino-acid biosynthesis; L-histidine biosynthesis; L-histidine from 5-phospho-alpha-D-ribose 1-diphosphate: step 1/9. Required for the first step of histidine biosynthesis. May allow the feedback regulation of ATP phosphoribosyltransferase activity by histidine. The polypeptide is ATP phosphoribosyltransferase regulatory subunit (Caldanaerobacter subterraneus subsp. tengcongensis (strain DSM 15242 / JCM 11007 / NBRC 100824 / MB4) (Thermoanaerobacter tengcongensis)).